The sequence spans 190 residues: dTTP/UTP pyrophosphatase (190 aa).

Asp-71 acts as the Proton acceptor in catalysis.

The protein belongs to the Maf family. YhdE subfamily. The cofactor is a divalent metal cation.

It localises to the cytoplasm. It carries out the reaction dTTP + H2O = dTMP + diphosphate + H(+). The enzyme catalyses UTP + H2O = UMP + diphosphate + H(+). Nucleoside triphosphate pyrophosphatase that hydrolyzes dTTP and UTP. May have a dual role in cell division arrest and in preventing the incorporation of modified nucleotides into cellular nucleic acids. The sequence is that of dTTP/UTP pyrophosphatase from Xanthomonas euvesicatoria pv. vesicatoria (strain 85-10) (Xanthomonas campestris pv. vesicatoria).